A 154-amino-acid polypeptide reads, in one-letter code: 3-hydroxyacyl-[acyl-carrier-protein] dehydratase FabZ (154 aa).

His-54 is an active-site residue.

This sequence belongs to the thioester dehydratase family. FabZ subfamily.

Its subcellular location is the cytoplasm. It catalyses the reaction a (3R)-hydroxyacyl-[ACP] = a (2E)-enoyl-[ACP] + H2O. Functionally, involved in unsaturated fatty acids biosynthesis. Catalyzes the dehydration of short chain beta-hydroxyacyl-ACPs and long chain saturated and unsaturated beta-hydroxyacyl-ACPs. The protein is 3-hydroxyacyl-[acyl-carrier-protein] dehydratase FabZ of Shewanella sp. (strain MR-4).